A 199-amino-acid chain; its full sequence is MNSGGGIVAAAAPSSGGGNVEWHVRPPNPKNPVVFFDVSIGGIPAGRIKMELFADIAPKTAENFRQFCTGELRKAGKPLGYKECQFHRVIKDFMVQSGDFLKNDGSGCMSIYGHKFEDENFTAKHTGPGLLSMANSGPNTNGCQFFITCAKCDWLDNKHVVFGRVLGDGLLVMRKIENVAIGPNNRPKLAVVITECGEM.

The 164-residue stretch at 35 to 198 (FFDVSIGGIP…LAVVITECGE (164 aa)) folds into the PPIase cyclophilin-type domain.

Belongs to the cyclophilin-type PPIase family. As to expression, ubiquitous.

The enzyme catalyses [protein]-peptidylproline (omega=180) = [protein]-peptidylproline (omega=0). PPIases accelerate the folding of proteins. It catalyzes the cis-trans isomerization of proline imidic peptide bonds in oligopeptides. The sequence is that of Peptidyl-prolyl cis-trans isomerase CYP22 (CYP22) from Arabidopsis thaliana (Mouse-ear cress).